A 267-amino-acid chain; its full sequence is Acyl-[acyl-carrier-protein]--UDP-N-acetylglucosamine O-acyltransferase (267 aa).

This sequence belongs to the transferase hexapeptide repeat family. LpxA subfamily. As to quaternary structure, homotrimer.

The protein resides in the cytoplasm. The catalysed reaction is a (3R)-hydroxyacyl-[ACP] + UDP-N-acetyl-alpha-D-glucosamine = a UDP-3-O-[(3R)-3-hydroxyacyl]-N-acetyl-alpha-D-glucosamine + holo-[ACP]. The protein operates within glycolipid biosynthesis; lipid IV(A) biosynthesis; lipid IV(A) from (3R)-3-hydroxytetradecanoyl-[acyl-carrier-protein] and UDP-N-acetyl-alpha-D-glucosamine: step 1/6. Involved in the biosynthesis of lipid A, a phosphorylated glycolipid that anchors the lipopolysaccharide to the outer membrane of the cell. In Cupriavidus necator (strain ATCC 17699 / DSM 428 / KCTC 22496 / NCIMB 10442 / H16 / Stanier 337) (Ralstonia eutropha), this protein is Acyl-[acyl-carrier-protein]--UDP-N-acetylglucosamine O-acyltransferase.